Here is a 304-residue protein sequence, read N- to C-terminus: Ribosomal RNA small subunit methyltransferase H (304 aa).

S-adenosyl-L-methionine-binding positions include 36-38 (GGH), D53, F79, D98, and Q105.

It belongs to the methyltransferase superfamily. RsmH family.

Its subcellular location is the cytoplasm. It catalyses the reaction cytidine(1402) in 16S rRNA + S-adenosyl-L-methionine = N(4)-methylcytidine(1402) in 16S rRNA + S-adenosyl-L-homocysteine + H(+). In terms of biological role, specifically methylates the N4 position of cytidine in position 1402 (C1402) of 16S rRNA. The protein is Ribosomal RNA small subunit methyltransferase H of Myxococcus xanthus (strain DK1622).